A 133-amino-acid polypeptide reads, in one-letter code: MQPGGDMSALLAQAQQMQQKLLEAQQQLANSEVHGQAGGGLVKVVVKGSGEVIGVTIDPKVVDPDDIETLQDLIVGAMRDASQQVTKMAQERLGALAGAMRPPAPPAAPPGAPGMPGMPGMPGAPGAPPVPGI.

The tract at residues 98-133 is disordered; that stretch reads GAMRPPAPPAAPPGAPGMPGMPGMPGAPGAPPVPGI. Over residues 102–113 the composition is skewed to pro residues; that stretch reads PPAPPAAPPGAP.

It belongs to the YbaB/EbfC family. As to quaternary structure, homodimer.

It is found in the cytoplasm. The protein localises to the nucleoid. Functionally, binds to DNA and alters its conformation. May be involved in regulation of gene expression, nucleoid organization and DNA protection. This Mycobacterium bovis (strain ATCC BAA-935 / AF2122/97) protein is Nucleoid-associated protein Mb3743c.